Reading from the N-terminus, the 563-residue chain is Arginine--tRNA ligase (563 aa).

Positions 121–131 match the 'HIGH' region motif; it reads PNIAKPMSMGH.

Belongs to the class-I aminoacyl-tRNA synthetase family. Monomer.

Its subcellular location is the cytoplasm. It catalyses the reaction tRNA(Arg) + L-arginine + ATP = L-arginyl-tRNA(Arg) + AMP + diphosphate. This is Arginine--tRNA ligase from Leuconostoc mesenteroides subsp. mesenteroides (strain ATCC 8293 / DSM 20343 / BCRC 11652 / CCM 1803 / JCM 6124 / NCDO 523 / NBRC 100496 / NCIMB 8023 / NCTC 12954 / NRRL B-1118 / 37Y).